Here is a 1171-residue protein sequence, read N- to C-terminus: MSLRFVIGRAGSGKSTLCLHEVQEELKQRPRGETILYLVPEQMTFQTQQALIGSEDVRGSIRAQVFSFSRLAWKVLQEVGGASRLHIDEAGVHMLLRKIVESRKDGLSVFQKAAEQNGFFEHLGSMIAEFKRYNVTPSNVYEMWQQLDAHSSSAEQKLLANKVYDLQLLYDDFERALIGKYLDSEDYLQLLVEKLPQSEYVKGAEIYIDGFHSFSPQELEIVRQLMICGARVTITLTIDEKTLAQPVNELDLFYETTLTYEKIKQVAREEKIEIEKTIPLMEQPRFHSPALAHLEKHYEARPNEKFHGEASVTIRTAANLRAEVEGVAREIRRLVADEDYRYRDIAVLLRNGESYYDVMRTLFTDYNIPHFIDEKRPMSHHPLVECIRSALEIISGNWRYDAVFRCVKTELLYPLDVRKETMREEMDEFENYCLAYGVQGKRWTSEDPWMYRRYRSLDDTNGMITDSEREMEEKINRLRDVVRTPVIRMQKRLKRAGTVMQMCEAVYLFLEELDVPKKLEALRIRAEESGDFLFATDHEQVWEEVMSLLDTFVEMLGEEKMSLSMFTDVMSTGLEALQFANIPPSLDQVLIANIDRSRLSNVKATFVIGVNEGVIPAAPMDEGMLSDEERDVLSAAGIELAPTTRQTLLEEQFVMYQMVTRATEKLYISCPLADEEGKTLLASSFIKKIKRMFPDVKDTFITNDVNDLSRSEQILYVATPEVTLSYVMQQLQTWKRYGFEGNLDFWWDVYNFYVTSDEWKQKSSRVLSSLFYRNRAQKLSTAVSRDLYGDKIKGSVSRMELFNRCAYAHFAQHGLSLRERDIFKLDAPDIGELFHAALKRIADRLLRENRTWADLSIKECEHLSTVVIEEIAPLLQRQILLSSNRHFYLKQKLQQIIFRTSIILREHAKSSGFVPVDLEVPFGMGGTGSLPPMEFSLPNGVKMEVVGRIDRVDKAEDENGTFLRIIDYKSSSKALDLTEVYYGLALQMLTYLDVVTSNAHTWMKKGHAASPAGVLYFHIHNPIVEVKGDASEAEIEKEILKKFKMKGLVLGDADVVRLMDNKLSTGSSDIISAGLKKDGSFSARSSIASEQEFNVLQKYVHHTFENIGKDITEGVIDIAPYKKGNKAACTFCNFKSVCQFDESLEDNQFRTLKDMKDSEAMEKIREEVGGE.

A UvrD-like helicase ATP-binding domain is found at M1–A390. G8 to S15 lines the ATP pocket. Positions M281–D587 constitute a UvrD-like helicase C-terminal domain. Positions 805, 1129, 1132, and 1138 each coordinate [4Fe-4S] cluster.

This sequence belongs to the helicase family. AddB/RexB type 1 subfamily. As to quaternary structure, heterodimer of AddA and AddB. Requires Mg(2+) as cofactor. It depends on [4Fe-4S] cluster as a cofactor.

The heterodimer acts as both an ATP-dependent DNA helicase and an ATP-dependent, dual-direction single-stranded exonuclease. Recognizes the chi site generating a DNA molecule suitable for the initiation of homologous recombination. The AddB subunit has 5' -&gt; 3' nuclease activity but not helicase activity. In Bacillus cereus (strain ZK / E33L), this protein is ATP-dependent helicase/deoxyribonuclease subunit B.